The primary structure comprises 75 residues: Putative membrane protein insertion efficiency factor (75 aa).

This sequence belongs to the UPF0161 family.

It localises to the cell inner membrane. Its function is as follows. Could be involved in insertion of integral membrane proteins into the membrane. This is Putative membrane protein insertion efficiency factor from Gloeothece citriformis (strain PCC 7424) (Cyanothece sp. (strain PCC 7424)).